Consider the following 301-residue polypeptide: uncharacterized protein (301 aa).

The 242-residue stretch at 45–286 (KELSDGWALN…EELGKMFTEL (242 aa)) folds into the Radical SAM core domain.

This is an uncharacterized protein from Acidianus two-tailed virus (ATV).